A 134-amino-acid chain; its full sequence is RxLR effector protein Avh238 (134 aa).

The N-terminal stretch at 1 to 21 (MRGVFFVAVAVAIFARSSAEA) is a signal peptide. A RxLR-dEER motif is present at residues 44–68 (RFLRVADSEDDDLAAPADDGKTEER). Residues 50-72 (DSEDDDLAAPADDGKTEERAPKF) are disordered. The span at 61–70 (DDGKTEERAP) shows a compositional bias: basic and acidic residues.

Belongs to the RxLR effector family.

Its subcellular location is the secreted. It localises to the host cytoplasm. It is found in the host nucleus. Effector that, due to the lack of a histidine residue at position 79, is not able to induce cell death in tomato, tobacco, eggplant, potato, or in A.thaliana. The protein is RxLR effector protein Avh238 of Phytophthora sojae (Soybean stem and root rot agent).